Consider the following 291-residue polypeptide: tRNA U34 carboxymethyltransferase (291 aa).

Residues Lys61, Trp75, Lys80, Gly100, 122 to 124, 149 to 150, Tyr169, and Arg284 each bind carboxy-S-adenosyl-L-methionine; these read DPS and VE.

It belongs to the class I-like SAM-binding methyltransferase superfamily. CmoB family. In terms of assembly, homotetramer.

The catalysed reaction is carboxy-S-adenosyl-L-methionine + 5-hydroxyuridine(34) in tRNA = 5-carboxymethoxyuridine(34) in tRNA + S-adenosyl-L-homocysteine + H(+). In terms of biological role, catalyzes carboxymethyl transfer from carboxy-S-adenosyl-L-methionine (Cx-SAM) to 5-hydroxyuridine (ho5U) to form 5-carboxymethoxyuridine (cmo5U) at position 34 in tRNAs. This chain is tRNA U34 carboxymethyltransferase, found in Campylobacter jejuni subsp. jejuni serotype O:23/36 (strain 81-176).